The primary structure comprises 211 residues: Large ribosomal subunit protein eL13 (211 aa).

Lys-16 is modified (N6-acetyllysine). Residues Ser-77 and Ser-106 each carry the phosphoserine modification. Residues Lys-123 and Lys-145 each participate in a glycyl lysine isopeptide (Lys-Gly) (interchain with G-Cter in SUMO2) cross-link. A Glycyl lysine isopeptide (Lys-Gly) (interchain with G-Cter in SUMO1); alternate cross-link involves residue Lys-174. Residues Lys-174 and Lys-177 each participate in a glycyl lysine isopeptide (Lys-Gly) (interchain with G-Cter in SUMO2); alternate cross-link. Lys-177 bears the N6-acetyllysine; alternate mark.

Belongs to the eukaryotic ribosomal protein eL13 family. Component of the 60S large ribosomal subunit (LSU).

Its subcellular location is the cytoplasm. Its function is as follows. Component of the ribosome, a large ribonucleoprotein complex responsible for the synthesis of proteins in the cell. The small ribosomal subunit (SSU) binds messenger RNAs (mRNAs) and translates the encoded message by selecting cognate aminoacyl-transfer RNA (tRNA) molecules. The large subunit (LSU) contains the ribosomal catalytic site termed the peptidyl transferase center (PTC), which catalyzes the formation of peptide bonds, thereby polymerizing the amino acids delivered by tRNAs into a polypeptide chain. The nascent polypeptides leave the ribosome through a tunnel in the LSU and interact with protein factors that function in enzymatic processing, targeting, and the membrane insertion of nascent chains at the exit of the ribosomal tunnel. As part of the LSU, it is probably required for its formation and the maturation of rRNAs. Plays a role in bone development. This Oryctolagus cuniculus (Rabbit) protein is Large ribosomal subunit protein eL13 (RPL13).